The primary structure comprises 436 residues: MASLLPFVQTRSNTVNFFMRRSGPELWKTLTSVSKSGQKKGRRNTRQPVRPLNRFYRIGSSPMKIEFAGLNAPIRMRETENQNLMSIAEQTEDEIRDSMGGTKKILEERDTGKKKRNREKLHPMERGFSGTQLVGQKLGAPPPLDGVNFDDFETYCLEVKRTSNMTNVFGRVHTMSALVVTGNGRGLAGYAVGKAPIHRTTTAIINGMGMASRKLFHVELHEGRTIYQDFYAECRNTRVFAQRRPRGFGLTCHPRLIKICEAIGIKDIYVKVEGSTKNYLALTHAFVTGLLNQETHQQLAERKGLHVVEMSPSRHFLPQIVASPISTELKTEETLEALDRLNLDDFYGEGRYPLRKPKSLPFFSNLEGHLDARWRKHPFRNQESTMIRLIADNMVPRWTRDARAAWADQRNERMTTGVEPMPLGIGLSHVVPKKDD.

The 67-residue stretch at 152 to 218 folds into the S5 DRBM domain; it reads FETYCLEVKR…GMASRKLFHV (67 aa). The interval 417 to 436 is disordered; sequence GVEPMPLGIGLSHVVPKKDD.

The protein belongs to the universal ribosomal protein uS5 family. As to quaternary structure, component of the mitochondrial ribosome small subunit (28S) which comprises a 12S rRNA and about 30 distinct proteins.

The protein localises to the mitochondrion. In Caenorhabditis elegans, this protein is Small ribosomal subunit protein uS5m (mrps-5).